Here is a 281-residue protein sequence, read N- to C-terminus: 39kDa core protein OPG130 (281 aa).

A compositionally biased stretch (polar residues) spans 1-22 (MDFFNKFSQGLAESSTPKSSIY). Disordered regions lie at residues 1-33 (MDFF…DTKK), 91-112 (ILLP…TSSD), and 149-192 (NKDQ…PQPP). The segment covering 24-33 (SEEKDPDTKK) has biased composition (basic and acidic residues). Positions 94–112 (PSSTAPTPKPRQQTNTSSD) are enriched in polar residues. Residues 154-175 (TTTPPSTQPSQTLPTTTCTQQS) show a composition bias toward low complexity.

The protein belongs to the orthopoxvirus OPG130 family. As to quaternary structure, interacts with OPG136 and its cleaved form. Post-translationally, its phosphorylation state is regulated by the OPG054 kinase and the OPG106 phosphatase.

Its subcellular location is the virion. It is found in the host endoplasmic reticulum-Golgi intermediate compartment membrane. Functionally, component of the virion core. Participates in virion assembly. This Vaccinia virus (strain Copenhagen) (VACV) protein is 39kDa core protein OPG130 (OPG130).